The chain runs to 148 residues: UPF0756 membrane protein YeaL (148 aa).

The next 4 helical transmembrane spans lie at 14–34 (ALGF…LIIV), 51–71 (LSIG…SGTL), 86–106 (LVAI…VTLM), and 112–132 (LVAG…GVPV).

Belongs to the UPF0756 family.

The protein resides in the cell membrane. The chain is UPF0756 membrane protein YeaL from Escherichia coli O157:H7.